We begin with the raw amino-acid sequence, 461 residues long: Proline--tRNA ligase (461 aa).

This sequence belongs to the class-II aminoacyl-tRNA synthetase family. ProS type 3 subfamily. As to quaternary structure, homodimer.

It is found in the cytoplasm. The catalysed reaction is tRNA(Pro) + L-proline + ATP = L-prolyl-tRNA(Pro) + AMP + diphosphate. Catalyzes the attachment of proline to tRNA(Pro) in a two-step reaction: proline is first activated by ATP to form Pro-AMP and then transferred to the acceptor end of tRNA(Pro). The polypeptide is Proline--tRNA ligase (Methanococcus vannielii (strain ATCC 35089 / DSM 1224 / JCM 13029 / OCM 148 / SB)).